The primary structure comprises 272 residues: Tryptophan synthase alpha chain (272 aa).

Active-site proton acceptor residues include glutamate 49 and aspartate 60.

This sequence belongs to the TrpA family. As to quaternary structure, tetramer of two alpha and two beta chains.

It catalyses the reaction (1S,2R)-1-C-(indol-3-yl)glycerol 3-phosphate + L-serine = D-glyceraldehyde 3-phosphate + L-tryptophan + H2O. It functions in the pathway amino-acid biosynthesis; L-tryptophan biosynthesis; L-tryptophan from chorismate: step 5/5. Functionally, the alpha subunit is responsible for the aldol cleavage of indoleglycerol phosphate to indole and glyceraldehyde 3-phosphate. This chain is Tryptophan synthase alpha chain, found in Psychrobacter cryohalolentis (strain ATCC BAA-1226 / DSM 17306 / VKM B-2378 / K5).